The following is a 382-amino-acid chain: Regulatory protein RapC (382 aa).

TPR repeat units follow at residues 102-138, 149-182, 183-216, 223-256, and 263-296; these read YYVNFFRGMYEFDKREFISAITYYKQAEKKLSFVADH, AEAYYYMKQTYFSLINIKNAYEIYVEQETYNVRI, IQCHFVFGVNLMDERNFEQAARHFKLALNMAQAE, GRAYYNLGLCYYNQDLLDPAIDYFEKAVSTFESS, and PQAYFLITLIYYKQGKHDKASEYHKRGYEYAKET.

This sequence belongs to the Rap family. Homodimer. Interacts specifically with the C-terminal DNA-binding domain of ComA. Interacts with CSF.

The protein resides in the cytoplasm. Inhibited by the competence and sporulation stimulating factor (CSF), encoded by phrC, which prevents RapC-ComA interaction. Involved in the regulation of genetic competence development. Inhibits the activity of ComA, a transcriptional factor that regulates the development of genetic competence. Acts by binding to ComA, independently of its phosphorylation state, leading to the inhibition of ComA DNA-binding activity. Does not dephosphorylate phospho-ComA and does not affect the phosphorylation level of the ComP-ComA system. The protein is Regulatory protein RapC (rapC) of Bacillus subtilis (strain 168).